A 375-amino-acid polypeptide reads, in one-letter code: Secondary metabolism regulator laeA (375 aa).

Positions 15 to 26 (ASPNRNNYSYQG) are enriched in polar residues. Disordered regions lie at residues 15–37 (ASPN…RSRQ) and 50–75 (QEPP…TSHY).

The protein belongs to the methyltransferase superfamily. LaeA methyltransferase family. As to quaternary structure, component of the heterotrimeric velvet complex composed of laeA, veA and velB; VeA acting as a bridging protein between laeA and velB.

Its subcellular location is the nucleus. The catalysed reaction is L-methionyl-[protein] + S-adenosyl-L-methionine = S-methyl-L-methionyl-[protein] + S-adenosyl-L-homocysteine. Functionally, methyltransferase that performs automethylation. No other methyl-accepting substrate has been identified yet. Component of the velvet transcription factor complex that acts as a global regulator for secondary metabolite gene expression. Controls the expression of the citric acid, demethylkotanin, orlandin, asperrubrol, tensidol B, atromentin and JBIR8 gene clusters. Also represses the expression of genes related to the production of BMS-192548 and aspernigrin A. In Aspergillus niger (strain ATCC 1015 / CBS 113.46 / FGSC A1144 / LSHB Ac4 / NCTC 3858a / NRRL 328 / USDA 3528.7), this protein is Secondary metabolism regulator laeA.